A 327-amino-acid chain; its full sequence is Glutamyl endopeptidase (327 aa).

An N-terminal signal peptide occupies residues 1–29; that stretch reads MKGKFLKVSSLFVATLTTATLVSSPAANA. The propeptide occupies 30–68; that stretch reads LSSKAMDNHPQQSQSSKQQTPKIQKGGNLKPLEQREHAN. Residues 33–61 are disordered; it reads KAMDNHPQQSQSSKQQTPKIQKGGNLKPL. A compositionally biased stretch (low complexity) spans 40 to 54; it reads QQSQSSKQQTPKIQK. Catalysis depends on charge relay system residues His-119, Asp-161, and Ser-237. The tract at residues 283 to 327 is disordered; that stretch reads FANDDQPNNPDNPDNPNNPDNPNNPNNPDNPDNGDNNNSDNPDAA. The span at 286–327 shows a compositional bias: low complexity; sequence DDQPNNPDNPDNPNNPDNPNNPNNPDNPDNGDNNNSDNPDAA. 9 tandem repeats follow at residues 289-291, 292-294, 295-297, 298-300, 301-303, 304-306, 307-309, 310-312, and 313-315. The 9 X 3 AA repeats of P-[DN]-N stretch occupies residues 289-315; it reads PNNPDNPDNPNNPDNPNNPNNPDNPDN.

This sequence belongs to the peptidase S1B family. In terms of processing, proteolytically cleaved by aureolysin (aur). This cleavage leads to the activation of SspA.

It is found in the secreted. The enzyme catalyses Preferential cleavage: Glu-|-Xaa, Asp-|-Xaa.. In terms of biological role, preferentially cleaves peptide bonds on the carboxyl-terminal side of aspartate and glutamate. Along with other extracellular proteases it is involved in colonization and infection of human tissues. Required for proteolytic maturation of thiol protease SspB and inactivation of SspC, an inhibitor of SspB. It is the most important protease for degradation of fibronectin-binding protein (FnBP) and surface protein A, which are involved in adherence to host cells. May also protect bacteria against host defense mechanism by cleaving the immunoglobulin classes IgG, IgA and IgM. May be involved in the stability of secreted lipases. The sequence is that of Glutamyl endopeptidase (sspA) from Staphylococcus aureus (strain MW2).